Reading from the N-terminus, the 395-residue chain is Altered inheritance of mitochondria protein 39, mitochondrial (395 aa).

A helical membrane pass occupies residues 161 to 181 (IFGGIFGVIIGYSLIYKVIYL).

This sequence belongs to the AIM39 family.

It localises to the mitochondrion membrane. The polypeptide is Altered inheritance of mitochondria protein 39, mitochondrial (AIM39) (Saccharomyces cerevisiae (strain YJM789) (Baker's yeast)).